We begin with the raw amino-acid sequence, 305 residues long: Acetylglutamate kinase (305 aa).

Substrate-binding positions include 80 to 81 (GG), R102, and N196.

Belongs to the acetylglutamate kinase family. ArgB subfamily.

It localises to the cytoplasm. It catalyses the reaction N-acetyl-L-glutamate + ATP = N-acetyl-L-glutamyl 5-phosphate + ADP. Its pathway is amino-acid biosynthesis; L-arginine biosynthesis; N(2)-acetyl-L-ornithine from L-glutamate: step 2/4. In terms of biological role, catalyzes the ATP-dependent phosphorylation of N-acetyl-L-glutamate. The polypeptide is Acetylglutamate kinase (Chlorobium luteolum (strain DSM 273 / BCRC 81028 / 2530) (Pelodictyon luteolum)).